We begin with the raw amino-acid sequence, 238 residues long: Ribitol-5-phosphate cytidylyltransferase (238 aa).

CTP-binding positions include 7–10 (LAGG) and 81–87 (GSDRNET).

Belongs to the IspD/TarI cytidylyltransferase family. TarI subfamily.

It carries out the reaction D-ribitol 5-phosphate + CTP + H(+) = CDP-L-ribitol + diphosphate. The protein operates within cell wall biogenesis; poly(ribitol phosphate) teichoic acid biosynthesis. Its function is as follows. Catalyzes the transfer of the cytidylyl group of CTP to D-ribitol 5-phosphate. The chain is Ribitol-5-phosphate cytidylyltransferase from Staphylococcus saprophyticus subsp. saprophyticus (strain ATCC 15305 / DSM 20229 / NCIMB 8711 / NCTC 7292 / S-41).